Here is a 252-residue protein sequence, read N- to C-terminus: JmjC domain-containing protein A (252 aa).

In terms of domain architecture, JmjC spans 103–252 (PYLRNFGMLD…VSCWGKEMIM (150 aa)).

The protein is JmjC domain-containing protein A (jcdA) of Dictyostelium discoideum (Social amoeba).